The chain runs to 351 residues: DNA polymerase IV (351 aa).

A UmuC domain is found at 4–185 (IIHIDMDCFF…LPLAKIPGVG (182 aa)). Mg(2+)-binding residues include aspartate 8 and aspartate 103. Glutamate 104 is a catalytic residue.

It belongs to the DNA polymerase type-Y family. Monomer. Requires Mg(2+) as cofactor.

It is found in the cytoplasm. The catalysed reaction is DNA(n) + a 2'-deoxyribonucleoside 5'-triphosphate = DNA(n+1) + diphosphate. In terms of biological role, poorly processive, error-prone DNA polymerase involved in untargeted mutagenesis. Copies undamaged DNA at stalled replication forks, which arise in vivo from mismatched or misaligned primer ends. These misaligned primers can be extended by PolIV. Exhibits no 3'-5' exonuclease (proofreading) activity. May be involved in translesional synthesis, in conjunction with the beta clamp from PolIII. The sequence is that of DNA polymerase IV from Salmonella paratyphi A (strain ATCC 9150 / SARB42).